Here is a 117-residue protein sequence, read N- to C-terminus: NADH-ubiquinone oxidoreductase chain 3 (117 aa).

Transmembrane regions (helical) follow at residues 4-24 (IILI…LASI), 60-80 (ITII…MIII), and 86-106 (IMIW…GLYH).

The protein belongs to the complex I subunit 3 family.

The protein resides in the mitochondrion membrane. It carries out the reaction a ubiquinone + NADH + 5 H(+)(in) = a ubiquinol + NAD(+) + 4 H(+)(out). Functionally, core subunit of the mitochondrial membrane respiratory chain NADH dehydrogenase (Complex I) that is believed to belong to the minimal assembly required for catalysis. Complex I functions in the transfer of electrons from NADH to the respiratory chain. The immediate electron acceptor for the enzyme is believed to be ubiquinone. In Drosophila subobscura (Fruit fly), this protein is NADH-ubiquinone oxidoreductase chain 3 (mt:ND3).